Here is a 336-residue protein sequence, read N- to C-terminus: Glucokinase (336 aa).

ATP is bound at residue 12–17; the sequence is ADIGGT.

Belongs to the bacterial glucokinase family.

The protein localises to the cytoplasm. The enzyme catalyses D-glucose + ATP = D-glucose 6-phosphate + ADP + H(+). The polypeptide is Glucokinase (Helicobacter pylori (strain J99 / ATCC 700824) (Campylobacter pylori J99)).